A 159-amino-acid polypeptide reads, in one-letter code: MAFSLLQFILSAHGSMETRNQDFQPWKDYMGLADMIRGMKRQEMQSDADSDEQAAALLESPSGPIRSRDSPEQNTSPGGGKPKSSPAERKFCSFCKHNGETEAVYTSHYLKNRDGDVMCPYLRQYKCPLCGATGAKAHTKRFCPMVDKNYCSVYAKSTW.

The tract at residues 42 to 87 (QEMQSDADSDEQAAALLESPSGPIRSRDSPEQNTSPGGGKPKSSPA) is disordered. The segment at 91–145 (FCSFCKHNGETEAVYTSHYLKNRDGDVMCPYLRQYKCPLCGATGAKAHTKRFCPM) adopts a Nanos-type zinc-finger fold. Zn(2+) is bound by residues cysteine 92, cysteine 95, histidine 108, cysteine 119, cysteine 127, cysteine 130, histidine 138, and cysteine 143. 2 consecutive short sequence motifs (C2HC) follow at residues 92-119 (CSFCKHNGETEAVYTSHYLKNRDGDVMC) and 127-143 (CPLCGATGAKAHTKRFC). The interval 92-159 (CSFCKHNGET…YCSVYAKSTW (68 aa)) is interaction with mylpfa.

The protein belongs to the nanos family. As to quaternary structure, interacts (via C-terminus) with myosin mylpfa/mylz2; the interaction negatively regulates mylpfa phosphorylation. In terms of tissue distribution, in the embryo, displays early ubiquitous expression before being restricted to primordial germ cells in a 3'-UTR-dependent manner. Expressed in early stage germ cells in larval and adult ovaries.

Its subcellular location is the cytoplasm. The protein localises to the perinuclear region. Functionally, RNA-binding protein which binds to RNA with no sequence specificity. Probably represses translation of specific mRNAs. Essential for the development of primordial germ cells (PGCs) by ensuring their proper migration and survival but is not required for PGC specification. Also required to maintain oocyte production in the adult ovary. Negatively regulates phosphorylation of myosin mylpfa/mylz2. This Danio rerio (Zebrafish) protein is Nanos homolog 3.